The sequence spans 207 residues: Cytochrome c oxidase subunit 3 (207 aa).

The next 5 helical transmembrane spans lie at 28–48 (FLGF…LFAT), 70–90 (VVFM…YAIY), 102–122 (LWFG…IYEF), 144–164 (LVGT…TLMI), and 186–206 (WHFI…MGMV).

The protein belongs to the cytochrome c oxidase subunit 3 family.

It is found in the cell membrane. It catalyses the reaction 4 Fe(II)-[cytochrome c] + O2 + 8 H(+)(in) = 4 Fe(III)-[cytochrome c] + 2 H2O + 4 H(+)(out). The polypeptide is Cytochrome c oxidase subunit 3 (ctaE) (Bacillus sp. (strain PS3)).